We begin with the raw amino-acid sequence, 355 residues long: Protein RecA (355 aa).

67-74 (GPESSGKT) lines the ATP pocket.

This sequence belongs to the RecA family.

It is found in the cytoplasm. Functionally, can catalyze the hydrolysis of ATP in the presence of single-stranded DNA, the ATP-dependent uptake of single-stranded DNA by duplex DNA, and the ATP-dependent hybridization of homologous single-stranded DNAs. It interacts with LexA causing its activation and leading to its autocatalytic cleavage. This chain is Protein RecA, found in Shewanella halifaxensis (strain HAW-EB4).